Consider the following 189-residue polypeptide: Ribosome maturation factor RimM (189 aa).

In terms of domain architecture, PRC barrel spans 118–189 (SGEYYWDDLI…IILVDWDENF (72 aa)).

The protein belongs to the RimM family. In terms of assembly, binds ribosomal protein uS19.

The protein resides in the cytoplasm. Its function is as follows. An accessory protein needed during the final step in the assembly of 30S ribosomal subunit, possibly for assembly of the head region. Essential for efficient processing of 16S rRNA. May be needed both before and after RbfA during the maturation of 16S rRNA. It has affinity for free ribosomal 30S subunits but not for 70S ribosomes. The protein is Ribosome maturation factor RimM of Ruthia magnifica subsp. Calyptogena magnifica.